Here is a 243-residue protein sequence, read N- to C-terminus: Small ribosomal subunit protein uS3 (243 aa).

Positions 39-110 (IRGFIQKKYA…QVRINVVEIE (72 aa)) constitute a KH type-2 domain. The tract at residues 215–243 (DQPLPVGASPRRKGSRRPQQFEDRSNDGK) is disordered. A compositionally biased stretch (basic and acidic residues) spans 233 to 243 (QQFEDRSNDGK).

This sequence belongs to the universal ribosomal protein uS3 family. As to quaternary structure, part of the 30S ribosomal subunit. Forms a tight complex with proteins S10 and S14.

Its function is as follows. Binds the lower part of the 30S subunit head. Binds mRNA in the 70S ribosome, positioning it for translation. In Prochlorococcus marinus (strain MIT 9211), this protein is Small ribosomal subunit protein uS3.